The primary structure comprises 430 residues: Proteasome-activating nucleotidase (430 aa).

A coiled-coil region spans residues 9 to 89; it reads TELKKEKKAF…LRRELDRMRV (81 aa). ATP contacts are provided by residues 214–219 and H353; that span reads GTGKTL. Residues 428 to 430 form a docks into pockets in the proteasome alpha-ring to cause gate opening region; the sequence is LYR.

It belongs to the AAA ATPase family. In terms of assembly, homohexamer. The hexameric complex has a two-ring architecture resembling a top hat that caps the 20S proteasome core at one or both ends. Alone, can form a complex composed of two stacked hexameric rings in vitro. Upon ATP-binding, the C-terminus of PAN interacts with the alpha-rings of the proteasome core by binding to the intersubunit pockets.

The protein localises to the cytoplasm. With respect to regulation, ATPase activity is inhibited by EDTA, N-ethylmaleimide (NEM) and p-chloromercuriphenyl-sulfonic acid (PCMS) in vitro. ATPase which is responsible for recognizing, binding, unfolding and translocation of substrate proteins into the archaeal 20S proteasome core particle. Is essential for opening the gate of the 20S proteasome via an interaction with its C-terminus, thereby allowing substrate entry and access to the site of proteolysis. Thus, the C-termini of the proteasomal ATPase function like a 'key in a lock' to induce gate opening and therefore regulate proteolysis. Unfolding activity requires energy from ATP hydrolysis, whereas ATP binding alone promotes ATPase-20S proteasome association which triggers gate opening, and supports translocation of unfolded substrates. In addition to ATP, is able to cleave other nucleotide triphosphates such as CTP, GTP and UTP, but hydrolysis of these other nucleotides is less effective in promoting proteolysis than ATP. Moreover, PAN by itself can function as a chaperone in vitro. The sequence is that of Proteasome-activating nucleotidase from Methanocaldococcus jannaschii (strain ATCC 43067 / DSM 2661 / JAL-1 / JCM 10045 / NBRC 100440) (Methanococcus jannaschii).